A 335-amino-acid polypeptide reads, in one-letter code: Anthranilate phosphoribosyltransferase (335 aa).

5-phospho-alpha-D-ribose 1-diphosphate is bound by residues Gly79, 82–83 (GD), Ser87, 89–92 (NIST), 107–115 (KHGNRSITS), and Ser119. Gly79 is an anthranilate binding site. Residue Ser91 participates in Mg(2+) binding. Asn110 contributes to the anthranilate binding site. Position 165 (Arg165) interacts with anthranilate. Asp224 and Glu225 together coordinate Mg(2+).

The protein belongs to the anthranilate phosphoribosyltransferase family. Homodimer. It depends on Mg(2+) as a cofactor.

The catalysed reaction is N-(5-phospho-beta-D-ribosyl)anthranilate + diphosphate = 5-phospho-alpha-D-ribose 1-diphosphate + anthranilate. The protein operates within amino-acid biosynthesis; L-tryptophan biosynthesis; L-tryptophan from chorismate: step 2/5. Its function is as follows. Catalyzes the transfer of the phosphoribosyl group of 5-phosphorylribose-1-pyrophosphate (PRPP) to anthranilate to yield N-(5'-phosphoribosyl)-anthranilate (PRA). The polypeptide is Anthranilate phosphoribosyltransferase (Lactococcus lactis subsp. lactis (strain IL1403) (Streptococcus lactis)).